The sequence spans 333 residues: Protein APEM9 (333 aa).

Topologically, residues Met1–Ala90 are cytoplasmic. Residues Ala91–Cys102 traverse the membrane as a helical segment. Residues Leu103–Ser268 lie on the Peroxisomal side of the membrane. Residues Arg269–Leu285 traverse the membrane as a helical segment. Topologically, residues Lys286–Thr333 are cytoplasmic.

In terms of assembly, interacts with PEX6 and PEX19-1, but not with PEX1. Interacts (via N-terminus) with PEX13, and (via N-terminus and C-terminus) with PEX16. Expressed in roots, leaves, stems, flowers, buds and fruits.

It is found in the peroxisome membrane. Involved in peroxisome biogenesis and matrix protein import. Required for pollen maturation and in vivo germination via its role in peroxisomal function, which partially involves jasmonic acid biosynthesis. Transported to peroxisomes via the interaction with PEX19-1. Required for peroxisomal protein import by acting as an anchoring protein for the AAA ATPase complex, which consists of PEX1 and PEX6. This Arabidopsis thaliana (Mouse-ear cress) protein is Protein APEM9.